A 78-amino-acid polypeptide reads, in one-letter code: Small ribosomal subunit protein bS18 (78 aa).

This sequence belongs to the bacterial ribosomal protein bS18 family. Part of the 30S ribosomal subunit. Forms a tight heterodimer with protein bS6.

Functionally, binds as a heterodimer with protein bS6 to the central domain of the 16S rRNA, where it helps stabilize the platform of the 30S subunit. This is Small ribosomal subunit protein bS18 from Lacticaseibacillus casei (strain BL23) (Lactobacillus casei).